The following is a 179-amino-acid chain: Diphosphoinositol polyphosphate phosphohydrolase 2 (179 aa).

Residues R9, 17 to 19 (KKR), and 38 to 40 (SSR) each bind substrate. Residues 17–143 (KKRAACLCFR…VHAEYLEKLK (127 aa)) form the Nudix hydrolase domain. 2 residues coordinate Mg(2+): G49 and E65. The short motif at 50-71 (GGMEPEEEPGGAAVREVYEEAG) is the Nudix box element. The active-site Proton acceptor is the E68. E69 contacts Mg(2+). Substrate is bound by residues 88–90 (RKH), R114, and K132.

This sequence belongs to the Nudix hydrolase family. DIPP subfamily. It depends on Mg(2+) as a cofactor. Mn(2+) is required as a cofactor.

Its subcellular location is the cytoplasm. The catalysed reaction is diphospho-myo-inositol polyphosphate + H2O = myo-inositol polyphosphate + phosphate.. It catalyses the reaction 5-diphospho-1D-myo-inositol 1,2,3,4,6-pentakisphosphate + H2O = 1D-myo-inositol hexakisphosphate + phosphate + H(+). It carries out the reaction 3,5-bis(diphospho)-1D-myo-inositol 1,2,4,6-tetrakisphosphate + H2O = 3-diphospho-1D-myo-inositol 1,2,4,5,6-pentakisphosphate + phosphate + 2 H(+). The enzyme catalyses 5-diphospho-1D-myo-inositol 1,3,4,6-tetrakisphosphate + H2O = 1D-myo-inositol 1,3,4,5,6-pentakisphosphate + phosphate + H(+). The catalysed reaction is P(1),P(6)-bis(5'-adenosyl) hexaphosphate + H2O = 2 ATP + 2 H(+). It catalyses the reaction P(1),P(5)-bis(5'-adenosyl) pentaphosphate + H2O = ADP + ATP + 2 H(+). It carries out the reaction 5-phospho-alpha-D-ribose 1-diphosphate + H2O = alpha-D-ribose 1,5-bisphosphate + phosphate + H(+). Cleaves the beta-phosphate from diphosphoinositol polyphosphates such as PP-InsP5 (diphosphoinositol pentakisphosphate), PP-InsP4 (diphosphoinositol tetrakisphosphate) and [PP]2-InsP4 (bisdiphosphoinositol tetrakisphosphate), suggesting that it may play a role in signal transduction. Diadenosine polyphosphates, particularly Ap6A (P(1),P(6)-bis(5a-adenosyl) hexaphosphate) and Ap5A (P(1),P(5)-bis(5'-adenosyl) pentaphosphate) are downstream effectors of a signaling cascade that regulates cardiac KATP channels, can also be substrates, although with lower preference than the diphosphoinositol polyphosphates. Can also catalyze the hydrolysis of 5-phosphoribose 1-diphosphate, generating the glycolytic activator ribose 1,5-bisphosphate. Does not play a role in U8 snoRNA decapping activity. Binds U8 snoRNA. The sequence is that of Diphosphoinositol polyphosphate phosphohydrolase 2 from Mus musculus (Mouse).